Consider the following 278-residue polypeptide: Tryptophan synthase alpha chain (278 aa).

Residues Glu-50 and Asp-61 each act as proton acceptor in the active site.

This sequence belongs to the TrpA family. In terms of assembly, tetramer of two alpha and two beta chains.

It catalyses the reaction (1S,2R)-1-C-(indol-3-yl)glycerol 3-phosphate + L-serine = D-glyceraldehyde 3-phosphate + L-tryptophan + H2O. It participates in amino-acid biosynthesis; L-tryptophan biosynthesis; L-tryptophan from chorismate: step 5/5. Functionally, the alpha subunit is responsible for the aldol cleavage of indoleglycerol phosphate to indole and glyceraldehyde 3-phosphate. This chain is Tryptophan synthase alpha chain, found in Rhodopseudomonas palustris (strain TIE-1).